A 352-amino-acid chain; its full sequence is Peptide chain release factor 1 (352 aa).

Position 229 is an N5-methylglutamine (Gln-229).

This sequence belongs to the prokaryotic/mitochondrial release factor family. Methylated by PrmC. Methylation increases the termination efficiency of RF1.

Its subcellular location is the cytoplasm. Peptide chain release factor 1 directs the termination of translation in response to the peptide chain termination codons UAG and UAA. The sequence is that of Peptide chain release factor 1 from Gluconacetobacter diazotrophicus (strain ATCC 49037 / DSM 5601 / CCUG 37298 / CIP 103539 / LMG 7603 / PAl5).